The sequence spans 296 residues: Glycine N-acyltransferase (296 aa).

N6-acetyllysine; alternate occurs at positions 16, 127, and 141. N6-succinyllysine; alternate is present on residues Lys16, Lys127, and Lys141. An N6-acetyllysine modification is found at Lys159. An N6-succinyllysine modification is found at Lys169. Lys183 and Lys256 each carry N6-acetyllysine; alternate. An N6-succinyllysine; alternate mark is found at Lys183 and Lys256.

It belongs to the glycine N-acyltransferase family. Predominantly expressed in liver (at protein level) and kidney. Down-regulated in hepatocellular carcinoma and other liver cancers.

The protein localises to the mitochondrion. It catalyses the reaction an acyl-CoA + glycine = an N-acylglycine + CoA + H(+). The catalysed reaction is benzoyl-CoA + glycine = N-benzoylglycine + CoA + H(+). Its function is as follows. Mitochondrial acyltransferase which transfers an acyl group to the N-terminus of glycine and glutamine, although much less efficiently. Can conjugate numerous substrates to form a variety of N-acylglycines, with a preference for benzoyl-CoA over phenylacetyl-CoA as acyl donors. Thereby detoxify xenobiotics, such as benzoic acid or salicylic acid, and endogenous organic acids, such as isovaleric acid. The polypeptide is Glycine N-acyltransferase (GLYAT) (Homo sapiens (Human)).